The following is a 664-amino-acid chain: DNA ligase (664 aa).

NAD(+) contacts are provided by residues 32–36 and 80–81; these read DKDYD and SL. K122 acts as the N6-AMP-lysine intermediate in catalysis. The NAD(+) site is built by R144, E178, and K314. Positions 407, 410, 423, and 429 each coordinate Zn(2+). Residues 587 to 664 enclose the BRCT domain; that stretch reads IKENIFNGKT…SEEDFKNMIG (78 aa).

This sequence belongs to the NAD-dependent DNA ligase family. LigA subfamily. Mg(2+) serves as cofactor. It depends on Mn(2+) as a cofactor.

It catalyses the reaction NAD(+) + (deoxyribonucleotide)n-3'-hydroxyl + 5'-phospho-(deoxyribonucleotide)m = (deoxyribonucleotide)n+m + AMP + beta-nicotinamide D-nucleotide.. Functionally, DNA ligase that catalyzes the formation of phosphodiester linkages between 5'-phosphoryl and 3'-hydroxyl groups in double-stranded DNA using NAD as a coenzyme and as the energy source for the reaction. It is essential for DNA replication and repair of damaged DNA. The chain is DNA ligase from Clostridium novyi (strain NT).